A 394-amino-acid chain; its full sequence is Phosphopentomutase (394 aa).

6 residues coordinate Mn(2+): D13, D286, H291, D327, H328, and H339.

It belongs to the phosphopentomutase family. The cofactor is Mn(2+).

The protein localises to the cytoplasm. The enzyme catalyses 2-deoxy-alpha-D-ribose 1-phosphate = 2-deoxy-D-ribose 5-phosphate. It catalyses the reaction alpha-D-ribose 1-phosphate = D-ribose 5-phosphate. It functions in the pathway carbohydrate degradation; 2-deoxy-D-ribose 1-phosphate degradation; D-glyceraldehyde 3-phosphate and acetaldehyde from 2-deoxy-alpha-D-ribose 1-phosphate: step 1/2. In terms of biological role, isomerase that catalyzes the conversion of deoxy-ribose 1-phosphate (dRib-1-P) and ribose 1-phosphate (Rib-1-P) to deoxy-ribose 5-phosphate (dRib-5-P) and ribose 5-phosphate (Rib-5-P), respectively. This chain is Phosphopentomutase, found in Bacillus cereus (strain B4264).